The sequence spans 160 residues: Cytochrome b6-f complex subunit 4 (160 aa).

3 helical membrane-spanning segments follow: residues 36–56 (LLYV…GLAV), 95–115 (LLGI…PFIE), and 131–151 (AVFL…TFPI).

Belongs to the cytochrome b family. PetD subfamily. As to quaternary structure, the 4 large subunits of the cytochrome b6-f complex are cytochrome b6, subunit IV (17 kDa polypeptide, PetD), cytochrome f and the Rieske protein, while the 4 small subunits are PetG, PetL, PetM and PetN. The complex functions as a dimer.

The protein localises to the cellular thylakoid membrane. Its function is as follows. Component of the cytochrome b6-f complex, which mediates electron transfer between photosystem II (PSII) and photosystem I (PSI), cyclic electron flow around PSI, and state transitions. This is Cytochrome b6-f complex subunit 4 from Crocosphaera subtropica (strain ATCC 51142 / BH68) (Cyanothece sp. (strain ATCC 51142)).